The primary structure comprises 200 residues: Acyl-homoserine-lactone synthase (200 aa).

This sequence belongs to the autoinducer synthase family.

It carries out the reaction a fatty acyl-[ACP] + S-adenosyl-L-methionine = an N-acyl-L-homoserine lactone + S-methyl-5'-thioadenosine + holo-[ACP] + H(+). In terms of biological role, required for the synthesis of BHL (N-butanoyl-L-homoserine lactone). The chain is Acyl-homoserine-lactone synthase (swrI) from Serratia liquefaciens.